The chain runs to 496 residues: Guanosine-5'-triphosphate,3'-diphosphate pyrophosphatase (496 aa).

This sequence belongs to the GppA/Ppx family. GppA subfamily.

It catalyses the reaction guanosine 3'-diphosphate 5'-triphosphate + H2O = guanosine 3',5'-bis(diphosphate) + phosphate + H(+). Its pathway is purine metabolism; ppGpp biosynthesis; ppGpp from GTP: step 2/2. Functionally, catalyzes the conversion of pppGpp to ppGpp. Guanosine pentaphosphate (pppGpp) is a cytoplasmic signaling molecule which together with ppGpp controls the 'stringent response', an adaptive process that allows bacteria to respond to amino acid starvation, resulting in the coordinated regulation of numerous cellular activities. In Aeromonas hydrophila subsp. hydrophila (strain ATCC 7966 / DSM 30187 / BCRC 13018 / CCUG 14551 / JCM 1027 / KCTC 2358 / NCIMB 9240 / NCTC 8049), this protein is Guanosine-5'-triphosphate,3'-diphosphate pyrophosphatase.